The following is a 322-amino-acid chain: Extracellular metalloprotease AFUA_1G07730 (322 aa).

Residues 1–22 form the signal peptide; it reads MLPFNSCVYVLLIISLMSNCRA. Residues N123 and N197 are each glycosylated (N-linked (GlcNAc...) asparagine). Residue H233 coordinates Zn(2+). Residue E234 is part of the active site. H237 contacts Zn(2+). An intrachain disulfide couples C272 to C299.

Belongs to the peptidase M43B family.

The protein localises to the secreted. Functionally, secreted metalloproteinase that allows assimilation of proteinaceous substrates. Plays a pivotal role as a pathogenicity determinant during infections and contributes to the ability of the pathogen to persist within the mammalian host. In Aspergillus fumigatus (strain ATCC MYA-4609 / CBS 101355 / FGSC A1100 / Af293) (Neosartorya fumigata), this protein is Extracellular metalloprotease AFUA_1G07730.